A 357-amino-acid chain; its full sequence is Alanine racemase, catabolic (357 aa).

Catalysis depends on Lys33, which acts as the Proton acceptor; specific for D-alanine. Residue Lys33 is modified to N6-(pyridoxal phosphate)lysine. At Lys122 the chain carries N6-carboxylysine. Residue Arg129 coordinates substrate. Tyr253 (proton acceptor; specific for L-alanine) is an active-site residue. Residue Met301 coordinates substrate.

Belongs to the alanine racemase family. In terms of assembly, homodimer. Pyridoxal 5'-phosphate is required as a cofactor.

It catalyses the reaction L-alanine = D-alanine. Its function is as follows. Isomerizes L-alanine to D-alanine which is then oxidized to pyruvate by DadA. The chain is Alanine racemase, catabolic from Pseudomonas aeruginosa (strain ATCC 15692 / DSM 22644 / CIP 104116 / JCM 14847 / LMG 12228 / 1C / PRS 101 / PAO1).